Consider the following 301-residue polypeptide: Growth-regulating factor 2 (301 aa).

One can recognise a QLQ domain in the interval 11 to 46; that stretch reads LFTATQWQELEHQALIYKYMAAGAPVPPDLLLHLRH. 2 short sequence motifs (bipartite nuclear localization signal) span residues 83–102 and 120–127; these read RRVE…KKWR and RGKNRSRK. The WRC domain occupies 87–131; the sequence is DPEPGRCRRTDGKKWRCSREAYGESKYCEKHMHRGKNRSRKPVEM.

This sequence belongs to the GRF family.

It is found in the nucleus. Functionally, transcription activator that plays a regulatory role in gibberellin-induced stem elongation. The sequence is that of Growth-regulating factor 2 (GRF2) from Oryza sativa subsp. japonica (Rice).